A 250-amino-acid chain; its full sequence is Troponin I 1 (250 aa).

2 disordered regions span residues 1 to 59 and 194 to 250; these read MSQI…ERKK and SVFT…ADEE. 2 stretches are compositionally biased toward basic and acidic residues: residues 21 to 45 and 206 to 221; these read DAQR…EAGQ and DKPE…KEES. Acidic residues predominate over residues 229–250; sequence PVEEEETAASEGEEEEEEADEE.

It belongs to the troponin I family. Strongly expressed in body wall muscle during embryogenesis, reduces during the larval stages to adult. In late-stage larvae and adults, expression is evident in the proximal gonad of both hermaphrodites and males.

Functionally, troponin I is the inhibitory subunit of troponin, the thin filament regulatory complex which confers calcium-sensitivity to muscle actomyosin ATPase activity. The sequence is that of Troponin I 1 (tni-1) from Caenorhabditis elegans.